The following is a 343-amino-acid chain: Protein RecA (343 aa).

ATP is bound at residue 66–73 (GPESSGKT).

It belongs to the RecA family.

It localises to the cytoplasm. Functionally, can catalyze the hydrolysis of ATP in the presence of single-stranded DNA, the ATP-dependent uptake of single-stranded DNA by duplex DNA, and the ATP-dependent hybridization of homologous single-stranded DNAs. It interacts with LexA causing its activation and leading to its autocatalytic cleavage. This is Protein RecA from Nitrosomonas eutropha (strain DSM 101675 / C91 / Nm57).